The primary structure comprises 349 residues: tRNA pseudouridine synthase D (349 aa).

Phe-27 contacts substrate. Asp-80 serves as the catalytic Nucleophile. Asn-129 serves as a coordination point for substrate. Residues 155 to 303 (GVPNYFGAQR…VEAARRAMLL (149 aa)) enclose the TRUD domain. Phe-329 is a substrate binding site.

Belongs to the pseudouridine synthase TruD family.

The catalysed reaction is uridine(13) in tRNA = pseudouridine(13) in tRNA. Functionally, responsible for synthesis of pseudouridine from uracil-13 in transfer RNAs. This Escherichia coli (strain 55989 / EAEC) protein is tRNA pseudouridine synthase D.